Consider the following 677-residue polypeptide: MNFELTSAYKPTGDQPEAIAQLTEGVLQGVPAQTLLGVTGSGKTFTIANVIANINKPTLILSHNKTLAAQLYSEFKGFFPNNAVEYYVSYYDYYQPEAYLPNSDTYIEKDLAINDEIDKLRLAATSSLLSGRKDVVVVSSVSCIYGMGNPSDFYKNVIEIERGRMLDRNVFLRRLVDSLYVRNDIDLNRGNFRVKGDTVDIFLAYSDTLLRVTFWGDEIDGIEEVDPITGVTTAPFEAYKIYPANLFMTTKEATLRAIHEIEDDLTKQVAFFESIGKEYEAKRLYERVTYDMEMIRELGHCSGIENYSRYFDGRAAGTRPYCLLDFFPDDFLLVIDESHVSVPQVRAMYGGDRARKINLVEYGFRLPAAMDNRPLKFEEFEEMTKQVIYVSATPAEYELIQSEGIVVEQVIRPTGLLDPVIEVRPSLNQIDDLMEEIQLRIEKEERVLVTTLTKRMAEELTEYLLNNNVRCNYIHSDVDTLERVKIMDDLRQGVYDVLIGVNLLREGLDLPEVSLVAILDADKEGFLRSHRSLTQTAGRAARNVNGKVIMYADKITDSMRLTIDETNRRREKQLAYNEANGITPQQIKKARNLSVFGSPGSEADELLKEKHAYVEPSSPNIAADPIVQYMSKAQMEKSIERTRKLMQEAAKKLEFIEAAQYRNELLKLEDLMKEKWG.

Residues 24–412 (EGVLQGVPAQ…EGIVVEQVIR (389 aa)) enclose the Helicase ATP-binding domain. 37-44 (GVTGSGKT) lines the ATP pocket. Positions 90-113 (YYDYYQPEAYLPNSDTYIEKDLAI) match the Beta-hairpin motif. The Helicase C-terminal domain maps to 429–591 (QIDDLMEEIQ…ITPQQIKKAR (163 aa)). Residues 636-671 (EKSIERTRKLMQEAAKKLEFIEAAQYRNELLKLEDL) enclose the UVR domain.

It belongs to the UvrB family. Forms a heterotetramer with UvrA during the search for lesions. Interacts with UvrC in an incision complex.

Its subcellular location is the cytoplasm. Functionally, the UvrABC repair system catalyzes the recognition and processing of DNA lesions. A damage recognition complex composed of 2 UvrA and 2 UvrB subunits scans DNA for abnormalities. Upon binding of the UvrA(2)B(2) complex to a putative damaged site, the DNA wraps around one UvrB monomer. DNA wrap is dependent on ATP binding by UvrB and probably causes local melting of the DNA helix, facilitating insertion of UvrB beta-hairpin between the DNA strands. Then UvrB probes one DNA strand for the presence of a lesion. If a lesion is found the UvrA subunits dissociate and the UvrB-DNA preincision complex is formed. This complex is subsequently bound by UvrC and the second UvrB is released. If no lesion is found, the DNA wraps around the other UvrB subunit that will check the other stand for damage. The sequence is that of UvrABC system protein B from Bacteroides thetaiotaomicron (strain ATCC 29148 / DSM 2079 / JCM 5827 / CCUG 10774 / NCTC 10582 / VPI-5482 / E50).